Reading from the N-terminus, the 505-residue chain is Lysine--tRNA ligase (505 aa).

Residues Glu415 and Glu422 each coordinate Mg(2+).

Belongs to the class-II aminoacyl-tRNA synthetase family. Homodimer. Requires Mg(2+) as cofactor.

The protein localises to the cytoplasm. It catalyses the reaction tRNA(Lys) + L-lysine + ATP = L-lysyl-tRNA(Lys) + AMP + diphosphate. This is Lysine--tRNA ligase from Xanthomonas campestris pv. campestris (strain 8004).